A 101-amino-acid chain; its full sequence is MIFLDSNFILLPCVLLAEVKRGFPWSSTTTVLDSCVFRLPSSPSTSSFAVLLSESSNRTSSSSSSSMLSVLFIPIILLLPPSCPLTGVTVAFFKAVGATIM.

The chain crosses the membrane as a helical span at residues 70-90 (VLFIPIILLLPPSCPLTGVTV).

It localises to the membrane. This is an uncharacterized protein from Saccharomyces cerevisiae (strain ATCC 204508 / S288c) (Baker's yeast).